A 196-amino-acid polypeptide reads, in one-letter code: Ribosome maturation factor RimP (196 aa).

Positions 164-196 are disordered; the sequence is LAPQKPNKPGPKKPGHEKKKPSNESAAGKPRAE. Residues 173–182 are compositionally biased toward basic residues; sequence GPKKPGHEKK.

Belongs to the RimP family.

It localises to the cytoplasm. In terms of biological role, required for maturation of 30S ribosomal subunits. In Xanthomonas axonopodis pv. citri (strain 306), this protein is Ribosome maturation factor RimP.